The chain runs to 310 residues: MTDKLPLALFLMGPTASGKTELAIRLRQKFPVEIISVDSALIYKGMDIGTAKPDERELSLAPHRLIDILDPSESYSAADFRRDALQAMDDIVAEGKIPLLVGGTMLYYKALLEGLSPLPAANPEIRQQIEQEALTKGWSVLHDELKEIDPVSAARIHPNDPQRLSRALEVYRISGKTLTELTQTKGESLPYRVKQFAIAPKDRAELHRRIELRFDKMMEAGFEEEMKALYARKDLHPDLPSIRCVGYRQMWEYLDGECTRDEAVFRGVCATRQLAKRQITWLRSWDDLTWLDSDNIEQALETMSEAIASD.

Residue G13 to T20 coordinates ATP. Substrate is bound at residue T15–T20. 4 interaction with substrate tRNA regions span residues D38–L41, Q162–R166, R243–R248, and K276–R283.

Belongs to the IPP transferase family. As to quaternary structure, monomer. It depends on Mg(2+) as a cofactor.

It catalyses the reaction adenosine(37) in tRNA + dimethylallyl diphosphate = N(6)-dimethylallyladenosine(37) in tRNA + diphosphate. Functionally, catalyzes the transfer of a dimethylallyl group onto the adenine at position 37 in tRNAs that read codons beginning with uridine, leading to the formation of N6-(dimethylallyl)adenosine (i(6)A). This is tRNA dimethylallyltransferase from Vibrio parahaemolyticus serotype O3:K6 (strain RIMD 2210633).